The chain runs to 165 residues: Fimbrial protein (165 aa).

Residues 1–21 (MRKSASAVAVLALIACGSAHA) form the signal peptide.

Its subcellular location is the fimbrium. In terms of biological role, structural subunit of the sef14 fimbriae. This chain is Fimbrial protein (sefA), found in Salmonella enteritidis.